Reading from the N-terminus, the 1818-residue chain is Protein encore (1818 aa).

Disordered stretches follow at residues 47–68 (ANSSGVGSGSGPGPGSGAGVSG), 123–282 (SAAG…NSSN), and 317–413 (AERH…GFIS). The span at 52–66 (VGSGSGPGPGSGAGV) shows a compositional bias: gly residues. The span at 124-137 (AAGSSNLGRQNSFG) shows a compositional bias: polar residues. The span at 141–152 (GNMKGKHLTRSH) shows a compositional bias: basic residues. Composition is skewed to low complexity over residues 156–179 (ESTSPPRTPTPRAASEQQQQQLQG), 186–199 (NNNNINSSSKAQSA), 217–233 (QQPQQQQQQQQQQQQSV), and 266–282 (NSNGSGMEFNNNNNSSN). Phosphoserine is present on residues Ser-267 and Ser-270. Over residues 317–328 (AERHDRHERHEM) the composition is skewed to basic and acidic residues. Ser-336 is modified (phosphoserine). The span at 338 to 348 (NHDEEPYHYEP) shows a compositional bias: basic and acidic residues. Low complexity-rich tracts occupy residues 372 to 381 (NLGGSSSGSI) and 391 to 410 (NCNNMSNNGQSNNSSNNTSG). Positions 444–508 (RNILLKIEKD…QCVIVAVAKN (65 aa)) constitute an R3H domain. The region spanning 510–576 (RIPEIRFQSL…ARSRIFSRTG (67 aa)) is the SUZ domain. Ser-535 is modified (phosphoserine). Residues 557 to 568 (FEEREEDYDRAR) are compositionally biased toward basic and acidic residues. 6 disordered regions span residues 557–806 (FEER…SYEQ), 885–916 (QEQEQEPMAGPSSSGSATSSVGITELPSSQTP), 936–959 (PYSQCEVKTPSQNHAPSAAVEEPK), 1176–1249 (GQAP…YNPS), 1332–1648 (AAAG…LVSH), and 1684–1709 (GAGASGAAGSNGGHQPGGGGGARSHI). A compositionally biased stretch (low complexity) spans 592-606 (YGGWEQQQQQQKQSQ). A compositionally biased stretch (gly residues) spans 644 to 655 (NYGGPPSSGGPG). Over residues 678 to 695 (QDSTGSTPWRLSPSSSGS) the composition is skewed to polar residues. Low complexity predominate over residues 713 to 771 (SGNQYQSQNQGNSSSGGYNNYRKSSPHQQQQSQQQQQSQQHHQQQLQQPQQLHQQSSQQ). A compositionally biased stretch (polar residues) spans 772–784 (YATTELSCSSTES). A compositionally biased stretch (low complexity) spans 893–904 (AGPSSSGSATSS). Positions 1176-1197 (GQAPMQQQAPHTGAGTTTGPPT) are enriched in low complexity. Polar residues predominate over residues 1220–1231 (SSNGSVVTSSAY). Over residues 1381 to 1392 (ASQSAPSTPAAP) the composition is skewed to low complexity. Polar residues predominate over residues 1430 to 1443 (TPHYYQGQNSNEGY). The span at 1503 to 1521 (ASPSSVSLGGASSSGGANS) shows a compositional bias: low complexity. Polar residues-rich tracts occupy residues 1554 to 1565 (AANSSPGVSSYE) and 1579 to 1596 (FRSQKSMNQDYRRSVSQR). Positions 1608 to 1633 (SHESSNNSPNSIVGSQSNSAANTPNA) are enriched in low complexity. The span at 1684-1705 (GAGASGAAGSNGGHQPGGGGGA) shows a compositional bias: gly residues.

As to quaternary structure, interacts with hfp; however, given the nuclear localization of hfp, the relevance of such interaction is unclear. Interacts with CycE, Cul1, and the SCF-proteasome complex. In terms of tissue distribution, expressed in all germline cells of the germarium including the stem cells and dividing cystocytes.

The protein resides in the cytoplasm. Required for the regulation of germline mitosis, karyosome formation, and establishment of dorsoventral (DS) polarity of the egg and embryo. Involved in proper grk mRNA localization and translation in the oocyte. May control germline mitosis by facilitating the cyclin E (CycE) proteolysis by the SCF-ubiquitin-proteasome complex. The protein is Protein encore (enc) of Drosophila melanogaster (Fruit fly).